The primary structure comprises 317 residues: Melanocyte-stimulating hormone receptor (317 aa).

Topologically, residues 1–37 (MPIHGAPRKLLGSLNSTPTATPKLGLAANHTGAPCLE) are extracellular. Asn29 carries an N-linked (GlcNAc...) asparagine glycan. A helical membrane pass occupies residues 38–63 (VSIPDGLFLSLGLVSLVENVLVVAAI). Residues 64–72 (AKNRNLHSP) are Cytoplasmic-facing. The chain crosses the membrane as a helical span at residues 73 to 93 (MYCFICCLALSDLLVSGSNML). Over 94-118 (EMAVVLLLEGGALATRASVVQQLHN) the chain is Extracellular. A helical membrane pass occupies residues 119-140 (TIDVLTCSSMLCSLCFLGAIAV). Residues 141–163 (DRHISIFYALRYHSIMTLPRAQR) are Cytoplasmic-facing. The chain crosses the membrane as a helical span at residues 164-183 (VIAAIWVASILSSTLFITYY). Residues 184-191 (DHAAVLLC) are Extracellular-facing. A helical membrane pass occupies residues 192–211 (LVVFFLAMLVLMAVLYVHML). Residues 212–240 (ARACQHAQGITRLHKRQPPAHQGFGLRGA) lie on the Cytoplasmic side of the membrane. Residues 241–266 (ATLTILLGIFFLCWGPFFLHLKLVVF) traverse the membrane as a helical segment. At 267–279 (CPQHLTCSCIFKN) the chain is on the extracellular side. The helical transmembrane segment at 280 to 300 (FKVFLTLIICNTIIDPLIYAF) threads the bilayer. At 301–317 (RSQELRRTLKEVLLCSW) the chain is on the cytoplasmic side. Cys315 carries S-palmitoyl cysteine lipidation.

Belongs to the G-protein coupled receptor 1 family. In terms of assembly, interacts with MGRN1, but does not undergo MGRN1-mediated ubiquitination; this interaction competes with GNAS-binding and thus inhibits agonist-induced cAMP production. Interacts with OPN3; the interaction results in a decrease in MC1R-mediated cAMP signaling and ultimately a decrease in melanin production in melanocytes.

It localises to the cell membrane. In terms of biological role, receptor for MSH (alpha, beta and gamma) and ACTH. The activity of this receptor is mediated by G proteins which activate adenylate cyclase. Mediates melanogenesis, the production of eumelanin (black/brown) and phaeomelanin (red/yellow), via regulation of cAMP signaling in melanocytes. The chain is Melanocyte-stimulating hormone receptor (MC1R) from Saimiri oerstedii (Central American squirrel monkey).